Reading from the N-terminus, the 397-residue chain is Phosphoglycerate kinase (397 aa).

Residues aspartate 22–asparagine 24, arginine 37, histidine 60–arginine 63, arginine 119, and arginine 152 contribute to the substrate site. Residues lysine 202, glutamate 324, and glycine 354–threonine 357 contribute to the ATP site.

It belongs to the phosphoglycerate kinase family. Monomer.

It is found in the cytoplasm. The enzyme catalyses (2R)-3-phosphoglycerate + ATP = (2R)-3-phospho-glyceroyl phosphate + ADP. It participates in carbohydrate degradation; glycolysis; pyruvate from D-glyceraldehyde 3-phosphate: step 2/5. This chain is Phosphoglycerate kinase (pgk), found in Zymomonas mobilis subsp. mobilis (strain ATCC 31821 / ZM4 / CP4).